Here is a 116-residue protein sequence, read N- to C-terminus: UPF0298 protein EF_2453 (116 aa).

This sequence belongs to the UPF0298 family.

It localises to the cytoplasm. In Enterococcus faecalis (strain ATCC 700802 / V583), this protein is UPF0298 protein EF_2453.